The chain runs to 217 residues: Ribulose-phosphate 3-epimerase (217 aa).

S6 is a substrate binding site. The a divalent metal cation site is built by H29, D31, and H62. Residue D31 is the Proton acceptor of the active site. Substrate contacts are provided by residues H62, 138–141, 171–173, and 193–194; these read GFGG, DGG, and GS. Residue D171 participates in a divalent metal cation binding. The Proton donor role is filled by D171.

Belongs to the ribulose-phosphate 3-epimerase family. A divalent metal cation serves as cofactor.

The enzyme catalyses D-ribulose 5-phosphate = D-xylulose 5-phosphate. It participates in carbohydrate degradation. Its function is as follows. Catalyzes the reversible epimerization of D-ribulose 5-phosphate to D-xylulose 5-phosphate. This is Ribulose-phosphate 3-epimerase from Helicobacter pylori (strain J99 / ATCC 700824) (Campylobacter pylori J99).